Consider the following 182-residue polypeptide: Vomeronasal secretory protein 1 (182 aa).

Positions 1-18 (MRALLLIISFCLVAVLQA) are cleaved as a signal peptide. N-linked (GlcNAc...) asparagine glycosylation occurs at Asn30. A disulfide bridge connects residues Cys76 and Cys168.

The protein belongs to the calycin superfamily. Lipocalin family. Specifically expressed in vomeronasal and posterior glands of the nasal septum, the ducts of which open into the lumen of the vomeronasal organ.

The protein localises to the secreted. Functionally, transport of lipophilic molecules, possible pheromone-carrier. This is Vomeronasal secretory protein 1 (Lcn3) from Mus musculus (Mouse).